Here is a 260-residue protein sequence, read N- to C-terminus: ELL-associated factor 2 (260 aa).

The segment at 17–104 (LKLGESFEKQ…TGECRLEKLS (88 aa)) is necessary for interaction with ELL. Basic and acidic residues predominate over residues 116-126 (GSSKIQYRKEQ). Disordered stretches follow at residues 116 to 154 (GSSKIQYRKEQQQQQMWNSARTPNLVKHSPSEDKMSPAS) and 170 to 234 (MDQM…HNRF). S146, S151, and S154 each carry phosphoserine. Residues 174–192 (SSCDSSSDSKSSSSSSSED) are compositionally biased toward low complexity. The segment at 177 to 260 (DSSSDSKSSS…LSESGSDSDD (84 aa)) is necessary for transactivation activity. Positions 225–234 (PDIDASHNRF) are enriched in basic and acidic residues. The tract at residues 246–260 (RNDLQLSESGSDSDD) is necessary for interaction with TCEA1 and transactivation activity.

This sequence belongs to the EAF family. Isoform 1 and isoform 2 interact with TCEA1. Component of the super elongation complex (SEC), at least composed of EAF1, EAF2, CDK9, MLLT3/AF9, AFF (AFF1 or AFF4), the P-TEFb complex and ELL (ELL, ELL2 or ELL3). Interacts with ELL and ELL2. In terms of tissue distribution, expressed in heart, brain, placenta, lung, skeletal muscle, kidney, pancreas, spleen, prostate, testis, small intestine, colon, adrenal, bone marrow, lymph node, spinal gland, stomach, thyroid, trachea, thymus, liver and leukocytes.

It is found in the nucleus speckle. In terms of biological role, acts as a transcriptional transactivator of TCEA1 elongation activity. Acts as a transcriptional transactivator of ELL and ELL2 elongation activities. Potent inducer of apoptosis in prostatic and non-prostatic cell lines. Inhibits prostate tumor growth in vivo. The sequence is that of ELL-associated factor 2 (EAF2) from Homo sapiens (Human).